Consider the following 365-residue polypeptide: uncharacterized protein (365 aa).

Disordered stretches follow at residues 218–262 (QRPS…AEAA) and 315–342 (PRLP…RTPC). Composition is skewed to basic and acidic residues over residues 239–257 (PDNR…KDPE) and 331–341 (MEFRNLSDRTP).

This is an uncharacterized protein from Mus musculus (Mouse).